Consider the following 403-residue polypeptide: Aspartic protease pepA (403 aa).

The signal sequence occupies residues 1–20; sequence MVLITQLGAALAVFSALTVA. The propeptide at 21–67 is activation peptide; it reads APTKGKARFSAPQVGIPKKAKHHPAAAYARALHKFGMKIPKAVSDAA. The Peptidase A1 domain occupies 82–400; that stretch reads YVTQVTVGGS…DTQGPRIGFA (319 aa). Residue Asp-98 is part of the active site. N-linked (GlcNAc...) asparagine glycosylation occurs at Asn-270. The active site involves Asp-293. Residues Cys-329 and Cys-362 are joined by a disulfide bond.

Belongs to the peptidase A1 family. As to quaternary structure, monomer.

The protein resides in the secreted. In terms of biological role, secreted aspartic endopeptidase that allows assimilation of proteinaceous substrates. The scissile peptide bond is attacked by a nucleophilic water molecule activated by two aspartic residues in the active site. Shows a broad primary substrate specificity. Favors hydrophobic residues at the P1 and P1' positions. This is Aspartic protease pepA from Arthroderma gypseum (strain ATCC MYA-4604 / CBS 118893) (Microsporum gypseum).